The chain runs to 306 residues: Glutaminase (306 aa).

Substrate-binding residues include serine 64, asparagine 115, glutamate 159, asparagine 166, tyrosine 190, tyrosine 242, and valine 260.

The protein belongs to the glutaminase family. As to quaternary structure, homotetramer.

It carries out the reaction L-glutamine + H2O = L-glutamate + NH4(+). The polypeptide is Glutaminase (Vibrio cholerae serotype O1 (strain ATCC 39541 / Classical Ogawa 395 / O395)).